A 225-amino-acid chain; its full sequence is Octanoyltransferase (225 aa).

One can recognise a BPL/LPL catalytic domain in the interval 42 to 219 (KNRQASMIFC…SICSALEYIN (178 aa)). Residues 79–86 (RGGKITWH), 149–151 (AIG), and 162–164 (GFA) contribute to the substrate site. Cys-180 acts as the Acyl-thioester intermediate in catalysis.

Belongs to the LipB family.

It localises to the cytoplasm. It catalyses the reaction octanoyl-[ACP] + L-lysyl-[protein] = N(6)-octanoyl-L-lysyl-[protein] + holo-[ACP] + H(+). It functions in the pathway protein modification; protein lipoylation via endogenous pathway; protein N(6)-(lipoyl)lysine from octanoyl-[acyl-carrier-protein]: step 1/2. In terms of biological role, catalyzes the transfer of endogenously produced octanoic acid from octanoyl-acyl-carrier-protein onto the lipoyl domains of lipoate-dependent enzymes. Lipoyl-ACP can also act as a substrate although octanoyl-ACP is likely to be the physiological substrate. This is Octanoyltransferase from Tropheryma whipplei (strain TW08/27) (Whipple's bacillus).